Consider the following 430-residue polypeptide: Enolase (430 aa).

Position 168 (Gln168) interacts with (2R)-2-phosphoglycerate. Glu210 serves as the catalytic Proton donor. Positions 247, 288, and 315 each coordinate Mg(2+). Residues Lys340, Arg369, Ser370, and Lys391 each coordinate (2R)-2-phosphoglycerate. Lys340 acts as the Proton acceptor in catalysis.

It belongs to the enolase family. Mg(2+) is required as a cofactor.

It is found in the cytoplasm. It localises to the secreted. The protein localises to the cell surface. The enzyme catalyses (2R)-2-phosphoglycerate = phosphoenolpyruvate + H2O. It participates in carbohydrate degradation; glycolysis; pyruvate from D-glyceraldehyde 3-phosphate: step 4/5. In terms of biological role, catalyzes the reversible conversion of 2-phosphoglycerate (2-PG) into phosphoenolpyruvate (PEP). It is essential for the degradation of carbohydrates via glycolysis. The chain is Enolase from Rippkaea orientalis (strain PCC 8801 / RF-1) (Cyanothece sp. (strain PCC 8801)).